The chain runs to 372 residues: NAD(P)H-quinone oxidoreductase subunit 1 (372 aa).

8 consecutive transmembrane segments (helical) span residues Trp-29–Val-49, Leu-97–Val-117, Leu-128–Met-148, Leu-176–Val-196, Ile-204–Leu-224, Phe-254–Val-274, Thr-308–Leu-328, and Val-351–Gly-371.

This sequence belongs to the complex I subunit 1 family. In terms of assembly, NDH-1 is composed of at least 11 different subunits.

Its subcellular location is the cellular thylakoid membrane. The enzyme catalyses a plastoquinone + NADH + (n+1) H(+)(in) = a plastoquinol + NAD(+) + n H(+)(out). The catalysed reaction is a plastoquinone + NADPH + (n+1) H(+)(in) = a plastoquinol + NADP(+) + n H(+)(out). Its function is as follows. NDH-1 shuttles electrons from an unknown electron donor, via FMN and iron-sulfur (Fe-S) centers, to quinones in the respiratory and/or the photosynthetic chain. The immediate electron acceptor for the enzyme in this species is believed to be plastoquinone. Couples the redox reaction to proton translocation, and thus conserves the redox energy in a proton gradient. This Trichodesmium erythraeum (strain IMS101) protein is NAD(P)H-quinone oxidoreductase subunit 1.